The primary structure comprises 283 residues: Bifunctional protein FolD (283 aa).

NADP(+) is bound by residues 166–168 (GAS), Ser191, and Ile232.

Belongs to the tetrahydrofolate dehydrogenase/cyclohydrolase family. In terms of assembly, homodimer.

It catalyses the reaction (6R)-5,10-methylene-5,6,7,8-tetrahydrofolate + NADP(+) = (6R)-5,10-methenyltetrahydrofolate + NADPH. It carries out the reaction (6R)-5,10-methenyltetrahydrofolate + H2O = (6R)-10-formyltetrahydrofolate + H(+). The protein operates within one-carbon metabolism; tetrahydrofolate interconversion. Catalyzes the oxidation of 5,10-methylenetetrahydrofolate to 5,10-methenyltetrahydrofolate and then the hydrolysis of 5,10-methenyltetrahydrofolate to 10-formyltetrahydrofolate. The protein is Bifunctional protein FolD of Chromobacterium violaceum (strain ATCC 12472 / DSM 30191 / JCM 1249 / CCUG 213 / NBRC 12614 / NCIMB 9131 / NCTC 9757 / MK).